The primary structure comprises 228 residues: Large ribosomal subunit protein uL23m (228 aa).

The segment at P194 to Q228 is disordered. Positions E195–A216 are enriched in acidic residues.

It belongs to the universal ribosomal protein uL23 family. Component of the mitochondrial large ribosomal subunit (mt-LSU). Mature N.crassa 74S mitochondrial ribosomes consist of a small (37S) and a large (54S) subunit. The 37S small subunit contains a 16S ribosomal RNA (16S mt-rRNA) and 32 different proteins. The 54S large subunit contains a 23S rRNA (23S mt-rRNA) and 42 different proteins. uL23m forms the wall of the exit tunnel.

Its subcellular location is the mitochondrion. Its function is as follows. Component of the mitochondrial ribosome (mitoribosome), a dedicated translation machinery responsible for the synthesis of mitochondrial genome-encoded proteins, including at least some of the essential transmembrane subunits of the mitochondrial respiratory chain. The mitoribosomes are attached to the mitochondrial inner membrane and translation products are cotranslationally integrated into the membrane. The chain is Large ribosomal subunit protein uL23m (mrp20) from Neurospora crassa (strain ATCC 24698 / 74-OR23-1A / CBS 708.71 / DSM 1257 / FGSC 987).